Here is a 530-residue protein sequence, read N- to C-terminus: Histone-arginine methyltransferase CARMER (530 aa).

In terms of domain architecture, SAM-dependent MTase PRMT-type spans 141–450; the sequence is ASQYFQFYGY…QSYDVTIDLH (310 aa). S-adenosyl-L-methionine contacts are provided by glutamine 154, arginine 163, glycine 187, glutamate 209, glutamate 238, and threonine 266. At arginine 501 the chain carries Asymmetric dimethylarginine; by autocatalysis.

This sequence belongs to the class I-like SAM-binding methyltransferase superfamily. Protein arginine N-methyltransferase family. As to quaternary structure, homodimer. The dimethylated protein is the major form.

The protein resides in the cytoplasm. It localises to the nucleus. The enzyme catalyses L-arginyl-[protein] + 2 S-adenosyl-L-methionine = N(omega),N(omega)-dimethyl-L-arginyl-[protein] + 2 S-adenosyl-L-homocysteine + 2 H(+). In terms of biological role, methylates (mono- and asymmetric dimethylation) the guanidino nitrogens of arginyl residues in proteins. May methylate histone H3 at 'Arg-17' and activate transcription via chromatin remodeling. The sequence is that of Histone-arginine methyltransferase CARMER (Art4) from Drosophila erecta (Fruit fly).